Here is a 282-residue protein sequence, read N- to C-terminus: Acyl-CoA-binding domain-containing protein 6 (282 aa).

The segment at 1–39 (MATPFLPSGATTGDSGGELSSGDDSGDMESFQTPEAEGT) is disordered. Residue S41 is modified to Phosphoserine. Residues 42–127 (LAELFEKAAA…VKKLDPGWNP (86 aa)) form the ACB domain. An acyl-CoA contacts are provided by residues 69–73 (YARFK) and K95. Residue S106 is modified to Phosphoserine. Y114 provides a ligand contact to an acyl-CoA. ANK repeat units follow at residues 191 to 220 (EGRA…GINC) and 224 to 253 (EGQT…DPTL).

As to quaternary structure, monomer.

Its subcellular location is the cytoplasm. The protein resides in the nucleus. In terms of biological role, binds long-chain acyl-coenzyme A molecules with a strong preference for unsaturated C18:1-CoA, lower affinity for unsaturated C20:4-CoA, and very weak affinity for saturated C16:0-CoA. Does not bind fatty acids. Plays a role in protein N-myristoylation. This chain is Acyl-CoA-binding domain-containing protein 6 (Acbd6), found in Mus musculus (Mouse).